A 187-amino-acid chain; its full sequence is Peptidyl-tRNA hydrolase (187 aa).

Tyrosine 15 lines the tRNA pocket. The active-site Proton acceptor is the histidine 20. The tRNA site is built by phenylalanine 64, asparagine 66, and asparagine 112.

The protein belongs to the PTH family. Monomer.

It localises to the cytoplasm. The enzyme catalyses an N-acyl-L-alpha-aminoacyl-tRNA + H2O = an N-acyl-L-amino acid + a tRNA + H(+). Functionally, hydrolyzes ribosome-free peptidyl-tRNAs (with 1 or more amino acids incorporated), which drop off the ribosome during protein synthesis, or as a result of ribosome stalling. Catalyzes the release of premature peptidyl moieties from peptidyl-tRNA molecules trapped in stalled 50S ribosomal subunits, and thus maintains levels of free tRNAs and 50S ribosomes. The sequence is that of Peptidyl-tRNA hydrolase from Parabacteroides distasonis (strain ATCC 8503 / DSM 20701 / CIP 104284 / JCM 5825 / NCTC 11152).